Reading from the N-terminus, the 896-residue chain is Alanine--tRNA ligase (896 aa).

Residues H574, H578, C677, and H681 each contribute to the Zn(2+) site.

This sequence belongs to the class-II aminoacyl-tRNA synthetase family. Zn(2+) serves as cofactor.

The protein localises to the cytoplasm. The catalysed reaction is tRNA(Ala) + L-alanine + ATP = L-alanyl-tRNA(Ala) + AMP + diphosphate. Functionally, catalyzes the attachment of alanine to tRNA(Ala) in a two-step reaction: alanine is first activated by ATP to form Ala-AMP and then transferred to the acceptor end of tRNA(Ala). Also edits incorrectly charged Ser-tRNA(Ala) and Gly-tRNA(Ala) via its editing domain. The protein is Alanine--tRNA ligase of Mycoplasma capricolum subsp. capricolum (strain California kid / ATCC 27343 / NCTC 10154).